We begin with the raw amino-acid sequence, 307 residues long: Elongation factor Ts (307 aa).

The tract at residues 80-83 (TDFV) is involved in Mg(2+) ion dislocation from EF-Tu.

The protein belongs to the EF-Ts family.

Its subcellular location is the cytoplasm. Functionally, associates with the EF-Tu.GDP complex and induces the exchange of GDP to GTP. It remains bound to the aminoacyl-tRNA.EF-Tu.GTP complex up to the GTP hydrolysis stage on the ribosome. This chain is Elongation factor Ts, found in Clostridium botulinum (strain 657 / Type Ba4).